The chain runs to 327 residues: Zinc transport protein ZntB (327 aa).

Residues 1-273 (MEAIKGSDVN…ARRTYTMSLM (273 aa)) are Cytoplasmic-facing. Residues 274–294 (AMVFLPSTFLTGLFGVNLGGI) traverse the membrane as a helical segment. At 295 to 300 (PGGGWQ) the chain is on the periplasmic side. The helical transmembrane segment at 301 to 321 (FGFSIFCILLVVLIGGVALWL) threads the bilayer. Over 322–327 (HRSKWL) the chain is Cytoplasmic.

It belongs to the CorA metal ion transporter (MIT) (TC 1.A.35) family.

It localises to the cell inner membrane. It catalyses the reaction Zn(2+)(out) + H(+)(out) = Zn(2+)(in) + H(+)(in). Zinc transporter. Acts as a Zn(2+):proton symporter, which likely mediates zinc ion uptake. The sequence is that of Zinc transport protein ZntB from Escherichia coli O139:H28 (strain E24377A / ETEC).